Here is a 579-residue protein sequence, read N- to C-terminus: Isocitrate dehydrogenase kinase/phosphatase (579 aa).

ATP-binding positions include 324-330 (ADGTPGM) and Lys345. Asp380 is an active-site residue.

This sequence belongs to the AceK family.

The protein resides in the cytoplasm. The enzyme catalyses L-seryl-[isocitrate dehydrogenase] + ATP = O-phospho-L-seryl-[isocitrate dehydrogenase] + ADP + H(+). Functionally, bifunctional enzyme which can phosphorylate or dephosphorylate isocitrate dehydrogenase (IDH) on a specific serine residue. This is a regulatory mechanism which enables bacteria to bypass the Krebs cycle via the glyoxylate shunt in response to the source of carbon. When bacteria are grown on glucose, IDH is fully active and unphosphorylated, but when grown on acetate or ethanol, the activity of IDH declines drastically concomitant with its phosphorylation. In Xanthomonas euvesicatoria pv. vesicatoria (strain 85-10) (Xanthomonas campestris pv. vesicatoria), this protein is Isocitrate dehydrogenase kinase/phosphatase.